Here is a 458-residue protein sequence, read N- to C-terminus: Nuclear transcription factor Y subunit gamma (458 aa).

The span at 305-315 (QQQFSQFTDGQ) shows a compositional bias: low complexity. The disordered stretch occupies residues 305 to 379 (QQQFSQFTDG…QQSSTSPPPS (75 aa)). Positions 339 to 351 (TGNSTPCTSSLPT) are enriched in polar residues.

The protein belongs to the NFYC/HAP5 subunit family. As to quaternary structure, heterotrimeric transcription factor composed of three components, NF-YA, NF-YB and NF-YC. NF-YB and NF-YC must interact and dimerize for NF-YA association and DNA binding.

The protein resides in the nucleus. Its function is as follows. Component of the sequence-specific heterotrimeric transcription factor (NF-Y) which specifically recognizes a 5'-CCAAT-3' box motif found in the promoters of its target genes. NF-Y can function as both an activator and a repressor, depending on its interacting cofactors. This chain is Nuclear transcription factor Y subunit gamma (NFYC), found in Homo sapiens (Human).